Here is a 1212-residue protein sequence, read N- to C-terminus: Dermatan-sulfate epimerase-like protein (1212 aa).

The first 20 residues, 1 to 20, serve as a signal peptide directing secretion; sequence MALMFTGHLLFLALLMFAFS. Residues asparagine 28, asparagine 666, asparagine 688, and asparagine 709 are each glycosylated (N-linked (GlcNAc...) asparagine). A run of 2 helical transmembrane segments spans residues 764–784 and 803–823; these read IIFP…CISL and WILI…WSTC. An N-linked (GlcNAc...) asparagine glycan is attached at asparagine 874.

This sequence belongs to the dermatan-sulfate isomerase family. Expressed in different brain areas as well as in multiple other peripheral tissues.

It localises to the membrane. This is Dermatan-sulfate epimerase-like protein (DSEL) from Homo sapiens (Human).